A 923-amino-acid polypeptide reads, in one-letter code: Isoleucine--tRNA ligase (923 aa).

Positions 57 to 67 (PYANGHIHIGH) match the 'HIGH' region motif. E560 lines the L-isoleucyl-5'-AMP pocket. The 'KMSKS' region signature appears at 601 to 605 (KMSKS). ATP is bound at residue K604. C895, C898, C915, and C918 together coordinate Zn(2+).

The protein belongs to the class-I aminoacyl-tRNA synthetase family. IleS type 1 subfamily. As to quaternary structure, monomer. The cofactor is Zn(2+).

The protein resides in the cytoplasm. The catalysed reaction is tRNA(Ile) + L-isoleucine + ATP = L-isoleucyl-tRNA(Ile) + AMP + diphosphate. In terms of biological role, catalyzes the attachment of isoleucine to tRNA(Ile). As IleRS can inadvertently accommodate and process structurally similar amino acids such as valine, to avoid such errors it has two additional distinct tRNA(Ile)-dependent editing activities. One activity is designated as 'pretransfer' editing and involves the hydrolysis of activated Val-AMP. The other activity is designated 'posttransfer' editing and involves deacylation of mischarged Val-tRNA(Ile). This is Isoleucine--tRNA ligase from Geobacter sulfurreducens (strain ATCC 51573 / DSM 12127 / PCA).